A 534-amino-acid polypeptide reads, in one-letter code: Membrane protein insertase YidC (534 aa).

The next 5 helical transmembrane spans lie at 7 to 27, 319 to 339, 342 to 362, 413 to 433, and 493 to 513; these read IIAV…SEYM, AIDL…LDFF, YVGN…LVFW, GGCL…QALL, and VMMF…SGLV.

Belongs to the OXA1/ALB3/YidC family. Type 1 subfamily. Interacts with the Sec translocase complex via SecD. Specifically interacts with transmembrane segments of nascent integral membrane proteins during membrane integration.

The protein resides in the cell inner membrane. Required for the insertion and/or proper folding and/or complex formation of integral membrane proteins into the membrane. Involved in integration of membrane proteins that insert both dependently and independently of the Sec translocase complex, as well as at least some lipoproteins. Aids folding of multispanning membrane proteins. This Nitratidesulfovibrio vulgaris (strain ATCC 29579 / DSM 644 / CCUG 34227 / NCIMB 8303 / VKM B-1760 / Hildenborough) (Desulfovibrio vulgaris) protein is Membrane protein insertase YidC.